The chain runs to 617 residues: DNA double-strand break repair protein Mre11 (617 aa).

Positions 12, 14, 53, and 88 each coordinate Mn(2+). Residue His-89 is the Proton donor of the active site. Residues His-158, Asp-189, and His-191 each coordinate Mn(2+). Positions 395-432 (SPVDPSSSVSSIESSGSVSPIDSVSTVSPSSPSSSAII) are enriched in low complexity. Disordered stretches follow at residues 395–437 (SPVD…EPEE) and 513–617 (VEDE…GDYL). Residues 529-547 (APQSSSPVSFSDNSQTGFS) are compositionally biased toward polar residues. Positions 549 to 559 (ISPPESIPSPE) are enriched in low complexity. Basic and acidic residues predominate over residues 560–583 (ILKENSEADADEKPVDGKLSEEKP).

Belongs to the MRE11/RAD32 family. In terms of assembly, homodimer. Forms a heterotetramer composed of two Mre11 subunits and two Rad50 subunits. Mn(2+) is required as a cofactor.

With respect to regulation, nuclease activity is regulated by Rad50. In terms of biological role, part of the Rad50/Mre11 complex, which is involved in the early steps of DNA double-strand break (DSB) repair. The complex may facilitate opening of the processed DNA ends to aid in the recruitment of HerA and NurA. Mre11 binds to DSB ends and has both double-stranded 3'-5' exonuclease activity and single-stranded endonuclease activity. In Methanosarcina mazei (strain ATCC BAA-159 / DSM 3647 / Goe1 / Go1 / JCM 11833 / OCM 88) (Methanosarcina frisia), this protein is DNA double-strand break repair protein Mre11.